We begin with the raw amino-acid sequence, 147 residues long: MFDVSFTELMVIGVIALVVIGPERLPKVARTIGHLLGRAQRYVNDVKSDIRREIELDELRKFKNEMDETARSMQTSLRETEDTLRDSTQALRAELDDTARDASKAVNGADAPAEPAPAVASDTDTRSIAPPAAATPADKTPPTGSAT.

The helical transmembrane segment at 1–21 threads the bilayer; it reads MFDVSFTELMVIGVIALVVIG. The disordered stretch occupies residues 67–147; the sequence is DETARSMQTS…DKTPPTGSAT (81 aa). Basic and acidic residues predominate over residues 93-103; the sequence is AELDDTARDAS. Composition is skewed to low complexity over residues 109–120 and 129–147; these read ADAPAEPAPAVA and APPAAATPADKTPPTGSAT.

The protein belongs to the TatB family. As to quaternary structure, the Tat system comprises two distinct complexes: a TatABC complex, containing multiple copies of TatA, TatB and TatC subunits, and a separate TatA complex, containing only TatA subunits. Substrates initially bind to the TatABC complex, which probably triggers association of the separate TatA complex to form the active translocon.

Its subcellular location is the cell inner membrane. Functionally, part of the twin-arginine translocation (Tat) system that transports large folded proteins containing a characteristic twin-arginine motif in their signal peptide across membranes. Together with TatC, TatB is part of a receptor directly interacting with Tat signal peptides. TatB may form an oligomeric binding site that transiently accommodates folded Tat precursor proteins before their translocation. The polypeptide is Sec-independent protein translocase protein TatB (Bordetella pertussis (strain Tohama I / ATCC BAA-589 / NCTC 13251)).